A 196-amino-acid chain; its full sequence is Cilia- and flagella-associated protein 107 (196 aa).

Mn regions lie at residues 47–62 (TPQC…MPDH) and 97–109 (ISTY…RHNY).

Microtubule inner protein component of sperm flagellar doublet microtubules.

Its subcellular location is the cytoplasm. The protein localises to the cytoskeleton. It is found in the cilium axoneme. It localises to the flagellum axoneme. Its function is as follows. Microtubule inner protein (MIP) part of the dynein-decorated doublet microtubules (DMTs) in cilia axoneme, which is required for motile cilia beating. This chain is Cilia- and flagella-associated protein 107, found in Mus musculus (Mouse).